Reading from the N-terminus, the 227-residue chain is Cytidylate kinase (227 aa).

12 to 20 (GPSGAGKGT) is a binding site for ATP.

Belongs to the cytidylate kinase family. Type 1 subfamily.

The protein resides in the cytoplasm. It carries out the reaction CMP + ATP = CDP + ADP. It catalyses the reaction dCMP + ATP = dCDP + ADP. This Photorhabdus laumondii subsp. laumondii (strain DSM 15139 / CIP 105565 / TT01) (Photorhabdus luminescens subsp. laumondii) protein is Cytidylate kinase.